Here is a 547-residue protein sequence, read N- to C-terminus: CTP synthase (547 aa).

An amidoligase domain region spans residues 1–265 (MARFIFITGG…DQAVLDAFQI (265 aa)). CTP is bound at residue S13. UTP is bound at residue S13. ATP is bound by residues 14–19 (SLGKGL) and D71. D71 and E139 together coordinate Mg(2+). Residues 146–148 (DIE), 186–191 (KTKPTQ), and K222 contribute to the CTP site. UTP-binding positions include 186 to 191 (KTKPTQ) and K222. One can recognise a Glutamine amidotransferase type-1 domain in the interval 291–546 (KIAIVGKYVQ…VRAAKESSRL (256 aa)). G353 is an L-glutamine binding site. Catalysis depends on C380, which acts as the Nucleophile; for glutamine hydrolysis. Residues 381-384 (LGMQ), E404, and R474 contribute to the L-glutamine site. Catalysis depends on residues H519 and E521.

It belongs to the CTP synthase family. In terms of assembly, homotetramer.

It catalyses the reaction UTP + L-glutamine + ATP + H2O = CTP + L-glutamate + ADP + phosphate + 2 H(+). The enzyme catalyses L-glutamine + H2O = L-glutamate + NH4(+). The catalysed reaction is UTP + NH4(+) + ATP = CTP + ADP + phosphate + 2 H(+). It functions in the pathway pyrimidine metabolism; CTP biosynthesis via de novo pathway; CTP from UDP: step 2/2. Allosterically activated by GTP, when glutamine is the substrate; GTP has no effect on the reaction when ammonia is the substrate. The allosteric effector GTP functions by stabilizing the protein conformation that binds the tetrahedral intermediate(s) formed during glutamine hydrolysis. Inhibited by the product CTP, via allosteric rather than competitive inhibition. In terms of biological role, catalyzes the ATP-dependent amination of UTP to CTP with either L-glutamine or ammonia as the source of nitrogen. Regulates intracellular CTP levels through interactions with the four ribonucleotide triphosphates. This is CTP synthase from Ruegeria pomeroyi (strain ATCC 700808 / DSM 15171 / DSS-3) (Silicibacter pomeroyi).